Here is a 147-residue protein sequence, read N- to C-terminus: Protein phosphatase 1 regulatory subunit 14B (147 aa).

The tract at residues Met1–Lys55 is disordered. N-acetylalanine is present on Ala2. The residue at position 21 (Ser21) is a Phosphoserine. Tyr29 bears the Phosphotyrosine mark. Ser32 bears the Phosphoserine mark. Thr57 carries the post-translational modification Phosphothreonine. Residues Asp61–Met103 are a coiled coil.

It belongs to the PP1 inhibitor family. Post-translationally, phosphorylated primarily on Thr-57 by PKC (in vitro). An unknown Ser is also phosphorylated by PKC (in vitro). As to expression, ubiquitous. Expressed at low levels.

The protein resides in the cytoplasm. Inhibitor of PPP1CA. Has over 50-fold higher inhibitory activity when phosphorylated. The polypeptide is Protein phosphatase 1 regulatory subunit 14B (PPP1R14B) (Homo sapiens (Human)).